We begin with the raw amino-acid sequence, 512 residues long: Histidine ammonia-lyase (512 aa).

Positions 143 to 145 form a cross-link, 5-imidazolinone (Ala-Gly); it reads ASG. Ser-144 bears the 2,3-didehydroalanine (Ser) mark.

The protein belongs to the PAL/histidase family. Post-translationally, contains an active site 4-methylidene-imidazol-5-one (MIO), which is formed autocatalytically by cyclization and dehydration of residues Ala-Ser-Gly.

The protein resides in the cytoplasm. The enzyme catalyses L-histidine = trans-urocanate + NH4(+). Its pathway is amino-acid degradation; L-histidine degradation into L-glutamate; N-formimidoyl-L-glutamate from L-histidine: step 1/3. This is Histidine ammonia-lyase from Ruegeria pomeroyi (strain ATCC 700808 / DSM 15171 / DSS-3) (Silicibacter pomeroyi).